The sequence spans 488 residues: Zinc finger protein 345 (488 aa).

C2H2-type zinc fingers lie at residues 62–84 (LECKECGKDFSFVSVLVRHQRIH), 90–112 (YECKECGKAFGSGANLAYHQRIH), 118–140 (FECKECGKAFGSGSNLTHHQRIH), 146–168 (YECKECGKAFSFGSGLIRHQIIH), 174–196 (YECKECGKSFSFESALIRHHRIH), 202–224 (YECIDCGKAFGSGSNLTQHRRIH), 230–252 (YECKACGMAFSSGSALTRHQRIH), 258–280 (YICNECGKAFSFGSALTRHQRIH), 286–308 (YVCKECGKAFNSGSDLTQHQRIH), 314–336 (YECKECEKAFRSGSKLIQHQRMH), 342–364 (YECKECGKTFSSGSDLTQHHRIH), 370–392 (YECKECGKAFGSGSKLIQHQLIH), 398–420 (YECKECGKSFSSGSALNRHQRIH), 426–448 (YECKECGKAFYSGSSLTQHQRIH), and 454–476 (YECKNCGKAYGRDSEFQQHKKSH).

Belongs to the krueppel C2H2-type zinc-finger protein family.

It localises to the nucleus. Functionally, may be involved in transcriptional regulation. This chain is Zinc finger protein 345 (ZNF345), found in Homo sapiens (Human).